Consider the following 379-residue polypeptide: tRNA-specific 2-thiouridylase MnmA (379 aa).

Residues 23-30 and L49 contribute to the ATP site; that span reads AMSGGVDS. The active-site Nucleophile is the C117. An intrachain disulfide couples C117 to C214. G141 is a binding site for ATP. Residues 163 to 165 form an interaction with tRNA region; that stretch reads RDQ. C214 acts as the Cysteine persulfide intermediate in catalysis.

The protein belongs to the MnmA/TRMU family.

Its subcellular location is the cytoplasm. It carries out the reaction S-sulfanyl-L-cysteinyl-[protein] + uridine(34) in tRNA + AH2 + ATP = 2-thiouridine(34) in tRNA + L-cysteinyl-[protein] + A + AMP + diphosphate + H(+). Functionally, catalyzes the 2-thiolation of uridine at the wobble position (U34) of tRNA, leading to the formation of s(2)U34. The sequence is that of tRNA-specific 2-thiouridylase MnmA from Cereibacter sphaeroides (strain ATCC 17023 / DSM 158 / JCM 6121 / CCUG 31486 / LMG 2827 / NBRC 12203 / NCIMB 8253 / ATH 2.4.1.) (Rhodobacter sphaeroides).